Here is a 263-residue protein sequence, read N- to C-terminus: Hydroxyethylthiazole kinase 1 (263 aa).

Met42 contributes to the substrate binding site. Residues Lys118 and Thr164 each contribute to the ATP site. Residue Gly191 participates in substrate binding.

Belongs to the Thz kinase family. Mg(2+) is required as a cofactor.

It catalyses the reaction 5-(2-hydroxyethyl)-4-methylthiazole + ATP = 4-methyl-5-(2-phosphooxyethyl)-thiazole + ADP + H(+). The protein operates within cofactor biosynthesis; thiamine diphosphate biosynthesis; 4-methyl-5-(2-phosphoethyl)-thiazole from 5-(2-hydroxyethyl)-4-methylthiazole: step 1/1. Catalyzes the phosphorylation of the hydroxyl group of 4-methyl-5-beta-hydroxyethylthiazole (THZ). The chain is Hydroxyethylthiazole kinase 1 from Clostridium botulinum (strain Langeland / NCTC 10281 / Type F).